Consider the following 299-residue polypeptide: Lipoyl synthase (299 aa).

7 residues coordinate [4Fe-4S] cluster: C34, C39, C45, C60, C64, C67, and S273. The Radical SAM core domain maps to 46 to 262; sequence WNKKHATVMI…KYVAYSKGFL (217 aa).

Belongs to the radical SAM superfamily. Lipoyl synthase family. It depends on [4Fe-4S] cluster as a cofactor.

The protein resides in the cytoplasm. The enzyme catalyses [[Fe-S] cluster scaffold protein carrying a second [4Fe-4S](2+) cluster] + N(6)-octanoyl-L-lysyl-[protein] + 2 oxidized [2Fe-2S]-[ferredoxin] + 2 S-adenosyl-L-methionine + 4 H(+) = [[Fe-S] cluster scaffold protein] + N(6)-[(R)-dihydrolipoyl]-L-lysyl-[protein] + 4 Fe(3+) + 2 hydrogen sulfide + 2 5'-deoxyadenosine + 2 L-methionine + 2 reduced [2Fe-2S]-[ferredoxin]. It functions in the pathway protein modification; protein lipoylation via endogenous pathway; protein N(6)-(lipoyl)lysine from octanoyl-[acyl-carrier-protein]: step 2/2. Catalyzes the radical-mediated insertion of two sulfur atoms into the C-6 and C-8 positions of the octanoyl moiety bound to the lipoyl domains of lipoate-dependent enzymes, thereby converting the octanoylated domains into lipoylated derivatives. In Ehrlichia canis (strain Jake), this protein is Lipoyl synthase.